Consider the following 463-residue polypeptide: Asparagine--tRNA ligase (463 aa).

It belongs to the class-II aminoacyl-tRNA synthetase family. As to quaternary structure, homodimer.

The protein localises to the cytoplasm. It carries out the reaction tRNA(Asn) + L-asparagine + ATP = L-asparaginyl-tRNA(Asn) + AMP + diphosphate + H(+). In Clostridium botulinum (strain Langeland / NCTC 10281 / Type F), this protein is Asparagine--tRNA ligase.